The following is a 146-amino-acid chain: uncharacterized protein (146 aa).

The disordered stretch occupies residues 67 to 93; the sequence is DDNGMESGFCSGATSTGQSASTSPAPV. Low complexity predominate over residues 77-92; it reads SGATSTGQSASTSPAP.

This is an uncharacterized protein from Caenorhabditis elegans.